Consider the following 447-residue polypeptide: NADH-ubiquinone oxidoreductase chain 4 (447 aa).

13 consecutive transmembrane segments (helical) span residues 28–48 (IFLATCLFMIKISSNYYFCDI), 56–76 (MISYGLILLSFWICGLMLMAS), 85–105 (YVNLFLFMIVFLLLMLIFTFS), 110–130 (FMFYLFFESSLIPTLFLILGW), 141–161 (IYLLFYTLLASLPLLIGIFYI), 183–203 (FLYLCMIFAFLVKMPMFLVHL), 213–233 (PVSGSMILAGVLLKLGGYGLL), 246–266 (FNYIWISISLIGGVLVSLICL), 273–293 (ALIAYSSVAHMGIVLSGLMTM), 301–321 (SYTLMIAHGLCSSGLFCLANI), 343–365 (SLSLWWFLLCSGNMAAPPTLNLL), 380–400 (LTMISLAFLSFFSAAYTLYLF), and 409–431 (YSGVYFFSSGTTREFLVLMLHWL).

It belongs to the complex I subunit 4 family.

It localises to the mitochondrion membrane. It carries out the reaction a ubiquinone + NADH + 5 H(+)(in) = a ubiquinol + NAD(+) + 4 H(+)(out). Its function is as follows. Core subunit of the mitochondrial membrane respiratory chain NADH dehydrogenase (Complex I) that is believed to belong to the minimal assembly required for catalysis. Complex I functions in the transfer of electrons from NADH to the respiratory chain. The immediate electron acceptor for the enzyme is believed to be ubiquinone. The sequence is that of NADH-ubiquinone oxidoreductase chain 4 from Aedes aegypti (Yellowfever mosquito).